Consider the following 322-residue polypeptide: Tetraacyldisaccharide 4'-kinase (322 aa).

An ATP-binding site is contributed by 54–61; the sequence is SVGGTGKT.

It belongs to the LpxK family.

It catalyses the reaction a lipid A disaccharide + ATP = a lipid IVA + ADP + H(+). The protein operates within glycolipid biosynthesis; lipid IV(A) biosynthesis; lipid IV(A) from (3R)-3-hydroxytetradecanoyl-[acyl-carrier-protein] and UDP-N-acetyl-alpha-D-glucosamine: step 6/6. Transfers the gamma-phosphate of ATP to the 4'-position of a tetraacyldisaccharide 1-phosphate intermediate (termed DS-1-P) to form tetraacyldisaccharide 1,4'-bis-phosphate (lipid IVA). The protein is Tetraacyldisaccharide 4'-kinase of Francisella philomiragia subsp. philomiragia (strain ATCC 25017 / CCUG 19701 / FSC 153 / O#319-036).